The primary structure comprises 251 residues: Octanoyltransferase (251 aa).

One can recognise a BPL/LPL catalytic domain in the interval 56–241; it reads AETPDEIWIV…NLDGASAAAD (186 aa). Residues 96–103, 168–170, and 181–183 each bind substrate; these read RGGQITYH, ALG, and GLS. C199 functions as the Acyl-thioester intermediate in the catalytic mechanism.

This sequence belongs to the LipB family.

It is found in the cytoplasm. The catalysed reaction is octanoyl-[ACP] + L-lysyl-[protein] = N(6)-octanoyl-L-lysyl-[protein] + holo-[ACP] + H(+). It functions in the pathway protein modification; protein lipoylation via endogenous pathway; protein N(6)-(lipoyl)lysine from octanoyl-[acyl-carrier-protein]: step 1/2. In terms of biological role, catalyzes the transfer of endogenously produced octanoic acid from octanoyl-acyl-carrier-protein onto the lipoyl domains of lipoate-dependent enzymes. Lipoyl-ACP can also act as a substrate although octanoyl-ACP is likely to be the physiological substrate. The polypeptide is Octanoyltransferase (Burkholderia vietnamiensis (strain G4 / LMG 22486) (Burkholderia cepacia (strain R1808))).